Reading from the N-terminus, the 2281-residue chain is Protein Ycf2 (2281 aa).

1635 to 1642 (GSIGSGRS) is an ATP binding site.

The protein belongs to the Ycf2 family.

It localises to the plastid. The protein resides in the chloroplast stroma. Functionally, probable ATPase of unknown function. Its presence in a non-photosynthetic plant (Epifagus virginiana) and experiments in tobacco indicate that it has an essential function which is probably not related to photosynthesis. In Coffea arabica (Arabian coffee), this protein is Protein Ycf2.